A 214-amino-acid chain; its full sequence is uncharacterized protein (214 aa).

The first 17 residues, 1–17, serve as a signal peptide directing secretion; the sequence is MWCFIVFLTIFLPTLEG. 2 N-linked (GlcNAc...) asparagine glycosylation sites follow: Asn88 and Asn139.

As to expression, component of the acid-insoluble organic matrix of calcified layers of the shell (at protein level).

Its subcellular location is the secreted. This is an uncharacterized protein from Lottia gigantea (Giant owl limpet).